Reading from the N-terminus, the 338-residue chain is Aspartate carbamoyltransferase catalytic subunit (338 aa).

Residues Arg-59 and Thr-60 each coordinate carbamoyl phosphate. Lys-87 lines the L-aspartate pocket. Residues Arg-109, His-142, and Gln-145 each coordinate carbamoyl phosphate. L-aspartate contacts are provided by Arg-182 and Arg-253. The carbamoyl phosphate site is built by Gly-294 and Pro-295.

This sequence belongs to the aspartate/ornithine carbamoyltransferase superfamily. ATCase family. As to quaternary structure, heterododecamer (2C3:3R2) of six catalytic PyrB chains organized as two trimers (C3), and six regulatory PyrI chains organized as three dimers (R2).

The enzyme catalyses carbamoyl phosphate + L-aspartate = N-carbamoyl-L-aspartate + phosphate + H(+). Its pathway is pyrimidine metabolism; UMP biosynthesis via de novo pathway; (S)-dihydroorotate from bicarbonate: step 2/3. In terms of biological role, catalyzes the condensation of carbamoyl phosphate and aspartate to form carbamoyl aspartate and inorganic phosphate, the committed step in the de novo pyrimidine nucleotide biosynthesis pathway. In Prochlorococcus marinus (strain SARG / CCMP1375 / SS120), this protein is Aspartate carbamoyltransferase catalytic subunit.